The following is a 283-amino-acid chain: NAD kinase (283 aa).

The Proton acceptor role is filled by Asp66. NAD(+) contacts are provided by residues 66–67 (DG), 134–135 (ND), Arg145, Arg163, Asp165, and 176–181 (TAYSMS).

Belongs to the NAD kinase family. The cofactor is a divalent metal cation.

It localises to the cytoplasm. It carries out the reaction NAD(+) + ATP = ADP + NADP(+) + H(+). Its function is as follows. Involved in the regulation of the intracellular balance of NAD and NADP, and is a key enzyme in the biosynthesis of NADP. Catalyzes specifically the phosphorylation on 2'-hydroxyl of the adenosine moiety of NAD to yield NADP. The protein is NAD kinase of Chlorobaculum tepidum (strain ATCC 49652 / DSM 12025 / NBRC 103806 / TLS) (Chlorobium tepidum).